A 153-amino-acid polypeptide reads, in one-letter code: UPF0235 protein C15orf40 (153 aa).

Positions 1–12 (MLRLRSGLRHLR) are enriched in basic residues. The interval 1 to 55 (MLRLRSGLRHLRATPNTRGSARLLCAEMPKKAGATTKGKSQSKEPERPLPPLGPV) is disordered. Phosphoserine is present on serine 116.

The protein belongs to the UPF0235 family.

The protein is UPF0235 protein C15orf40 (C15orf40) of Homo sapiens (Human).